The chain runs to 504 residues: Anaerobic nitric oxide reductase transcription regulator NorR (504 aa).

Asp-57 is subject to 4-aspartylphosphate. The Sigma-54 factor interaction domain maps to 187-416; that stretch reads MIGLSPGMTQ…LEHAIHRAVV (230 aa). Residues 215–222 and 278–287 contribute to the ATP site; these read GETGTGKE and ADNGTLFLDE. A DNA-binding region (H-T-H motif) is located at residues 479–498; sequence WAACARMLETDVANLHRLAK.

Its pathway is nitrogen metabolism; nitric oxide reduction. Functionally, required for the expression of anaerobic nitric oxide (NO) reductase, acts as a transcriptional activator for at least the norVW operon. Activation also requires sigma-54. The sequence is that of Anaerobic nitric oxide reductase transcription regulator NorR from Escherichia coli O17:K52:H18 (strain UMN026 / ExPEC).